Consider the following 441-residue polypeptide: MNQAKKLYLETFGCQMNVSDSEKIVTLMKGMGYQQTQDPVDADLVLLNTCSIRATAEQRVYGHLGKFKSIKKTKPGLIIGVGGCVAQQEGEKLLKKAPFVNLVFGTHNLHLLQGMVAAAEEGKRSSQTDFLDDEKRFDLFPHSEAEGGVTRFVTVMQGCDNFCAYCIVPHVRGREISRSAAKVVEEVRALADSGVTEVTLLGQNVNSYCSKQPGEPDFPDLLRLVAQVDGIERIRFTTSHPKDMSPRLIECFADLPKLAPHIHLPAQSGSDRVLERMNRGYTAQQYLAKVAALKEACPAIQFTGDMIVGFPGEDEAAFQDTMALMEQVQYADLFSFIYSARPGTKAAEYADDATRAEKQGRLERLQAAQKKTTLARNRSLEGTVQKVLVEGLSSTGDSLFGRTGGNRGTVMAGDPSLAGRVLDVKIVEGLQTLLKGEIVHD.

The region spanning 5–121 (KKLYLETFGC…LQGMVAAAEE (117 aa)) is the MTTase N-terminal domain. Residues cysteine 14, cysteine 50, cysteine 84, cysteine 159, cysteine 163, and cysteine 166 each coordinate [4Fe-4S] cluster. Residues 145–375 (AEGGVTRFVT…QAAQKKTTLA (231 aa)) enclose the Radical SAM core domain. The 63-residue stretch at 378-440 (RSLEGTVQKV…QTLLKGEIVH (63 aa)) folds into the TRAM domain.

It belongs to the methylthiotransferase family. MiaB subfamily. As to quaternary structure, monomer. It depends on [4Fe-4S] cluster as a cofactor.

Its subcellular location is the cytoplasm. It carries out the reaction N(6)-dimethylallyladenosine(37) in tRNA + (sulfur carrier)-SH + AH2 + 2 S-adenosyl-L-methionine = 2-methylsulfanyl-N(6)-dimethylallyladenosine(37) in tRNA + (sulfur carrier)-H + 5'-deoxyadenosine + L-methionine + A + S-adenosyl-L-homocysteine + 2 H(+). In terms of biological role, catalyzes the methylthiolation of N6-(dimethylallyl)adenosine (i(6)A), leading to the formation of 2-methylthio-N6-(dimethylallyl)adenosine (ms(2)i(6)A) at position 37 in tRNAs that read codons beginning with uridine. The sequence is that of tRNA-2-methylthio-N(6)-dimethylallyladenosine synthase from Citrifermentans bemidjiense (strain ATCC BAA-1014 / DSM 16622 / JCM 12645 / Bem) (Geobacter bemidjiensis).